The chain runs to 934 residues: Rab GTPase-activating protein tbc-11 (934 aa).

The PID domain occupies V16 to L134. The segment at F337 to S383 is disordered. Polar residues predominate over residues Q351–P361. In terms of domain architecture, Rab-GAP TBC spans G422–G612. Coiled-coil stretches lie at residues K727 to L800 and L861 to Q895.

Rab GTPase activating protein for the small GTPases rab-6.1 and rab-6.2. Probably acts through rab-6.1 and rab-6.2 to play a role in microRNA-mediated gene silencing in different tissue types. Required for seam cell division and alae formation. The chain is Rab GTPase-activating protein tbc-11 from Caenorhabditis elegans.